Consider the following 460-residue polypeptide: Ribosomal protein uS12 methylthiotransferase RimO (460 aa).

Residues 17–128 (PAVAVLHLGC…IVQVIQRAER (112 aa)) form the MTTase N-terminal domain. The [4Fe-4S] cluster site is built by Cys-26, Cys-62, Cys-91, Cys-166, Cys-170, and Cys-173. Residues 152–381 (TTHAPVAYLR…MQLQQGIAFR (230 aa)) enclose the Radical SAM core domain. Residues 384–450 (REQVGQVVPV…PYDLFGQVVE (67 aa)) enclose the TRAM domain.

This sequence belongs to the methylthiotransferase family. RimO subfamily. [4Fe-4S] cluster serves as cofactor.

The protein resides in the cytoplasm. It catalyses the reaction L-aspartate(89)-[ribosomal protein uS12]-hydrogen + (sulfur carrier)-SH + AH2 + 2 S-adenosyl-L-methionine = 3-methylsulfanyl-L-aspartate(89)-[ribosomal protein uS12]-hydrogen + (sulfur carrier)-H + 5'-deoxyadenosine + L-methionine + A + S-adenosyl-L-homocysteine + 2 H(+). Its function is as follows. Catalyzes the methylthiolation of an aspartic acid residue of ribosomal protein uS12. The protein is Ribosomal protein uS12 methylthiotransferase RimO of Synechococcus sp. (strain JA-3-3Ab) (Cyanobacteria bacterium Yellowstone A-Prime).